The sequence spans 1057 residues: Collagen alpha-1(I) chain (1057 aa).

Position 1 is a pyrrolidone carboxylic acid (Q1). Over residues 1–10 (QLSYGYDEKS) the composition is skewed to basic and acidic residues. The interval 1–17 (QLSYGYDEKSAGGISVP) is nonhelical region (N-terminal). The segment at 1–1057 (QLSYGYDEKS…AHDGGRYYRA (1057 aa)) is disordered. Allysine is present on K9. S10 bears the Phosphoserine mark. Collagen-like domains lie at 18–76 (GPMG…EAGK), 75–134 (GKPG…PGEN), 135–193 (GAPG…AKGE), and 195–252 (GPQG…GFPG). The triple-helical region stretch occupies residues 18–1031 (GPMGPSGPRG…PGPPGPPGPP (1014 aa)). A 4-hydroxyproline mark is found at P29, P32, P35, P44, P47, P50, P65, P80, P86, P95, and P101. Residues 37-56 (PQGFQGPPGEPGEPGASGPM) show a composition bias toward low complexity. Over residues 68-82 (NGDDGEAGKPGRPGE) the composition is skewed to basic and acidic residues. K104 carries the 5-hydroxylysine; alternate modification. O-linked (Gal...) hydroxylysine; alternate glycosylation occurs at K104. At S110 the chain carries Phosphoserine. Residues 118–134 (DAGPAGPKGEPGSPGEN) show a composition bias toward low complexity. A 4-hydroxyproline mark is found at P128, P131, P137, P146, and P152. A compositionally biased stretch (low complexity) spans 157 to 170 (PAGARGNDGATGAA). Pro residues predominate over residues 172 to 184 (PPGPTGPAGPPGF). 11 positions are modified to 4-hydroxyproline: P173, P182, P185, P212, P215, P227, P233, P242, P248, P251, and P266. Over residues 218 to 269 (AGAAGPAGNPGADGQPGAKGANGAPGIAGAPGFPGARGPAGPQGPSGAPGPK) the composition is skewed to low complexity. K269 is subject to 5-hydroxylysine. Residues P275, P278, P290, P292, P299, P314, P320, P323, P329, and P335 each carry the 4-hydroxyproline modification. Over residues 287–296 (KGEPGPIGIQ) the composition is skewed to low complexity. The segment covering 324 to 333 (GERGGPGSRG) has biased composition (gly residues). K344 is modified (5-hydroxylysine). 28 positions are modified to 4-hydroxyproline: P353, P362, P368, P374, P383, P386, P395, P404, P410, P422, P431, P440, P443, P461, P479, P485, P491, P497, P503, P509, P521, P530, P542, P554, P557, P563, P569, and P578. Residues 377 to 403 (KGLTGSPGSPGPDGKTGPPGPAGQDGR) are compositionally biased toward low complexity. The span at 412 to 431 (ARGQAGVMGFPGPKGAAGEP) shows a compositional bias: low complexity. A compositionally biased stretch (low complexity) spans 473-500 (QGPAGSPGFQGLPGPAGPPGEAGKPGEQ). 2 consecutive Collagen-like domains span residues 522-579 (GERG…GLPG) and 555-613 (GAPG…PPGP). Positions 539–566 (NGAPGNDGAKGDAGAPGAPGSQGAPGLQ) are enriched in low complexity. A 5-hydroxylysine modification is found at K590. 4-hydroxyproline is present on residues P596, P611, and P617. Collagen-like domains are found at residues 618–676 (GDKG…AKGD) and 678–736 (GPPG…PPGP). Low complexity predominate over residues 623-637 (AGPSGPAGPTGARGA). At S626 the chain carries Phosphoserine. 4-hydroxyproline occurs at positions 638, 644, 647, 656, 662, 680, 689, and 698. Over residues 650 to 677 (AGFAGPPGADGQPGAKGEPGDAGAKGDA) the composition is skewed to low complexity. K701 is subject to 5-hydroxylysine. The span at 706 to 722 (SAGPPGATGFPGAAGRV) shows a compositional bias: low complexity. 4-hydroxyproline occurs at positions 710 and 716. Residue P724 is modified to 3-hydroxyproline. P725, P734, P737, P758, P764, P767, P776, and P785 each carry 4-hydroxyproline. Residues 751 to 760 (ETGPAGRPGE) show a composition bias toward low complexity. A compositionally biased stretch (low complexity) spans 770–785 (AGEKGSPGADGPAGAP). Positions 789–798 (GPQGIGGQRG) are enriched in gly residues. A 4-hydroxyproline mark is found at P803, P812, P815, P821, P836, P842, P848, P857, P863, and P869. Positions 804–861 (GQRGERGFPGLPGPSGEPGKQGPSGSSGERGPPGPAGPPGLAGPPGESGREGAPGAEG) constitute a Collagen-like 9 domain. Residues 835–845 (PPGPAGPPGLA) are compositionally biased toward pro residues. Residue K872 is modified to 5-hydroxylysine. The segment covering 881–896 (SGPPGAPGAPGAPGPV) has biased composition (pro residues). P884, P887, and P890 each carry 4-hydroxyproline. The span at 917 to 931 (AGPAGVRGPAGPQGP) shows a compositional bias: low complexity. Collagen-like domains lie at 918-976 (GPAG…ASGP) and 972-1030 (GASG…PPGP). The segment covering 932-946 (RGDKGETGEQGDRGL) has biased composition (basic and acidic residues). K935 bears the 5-hydroxylysine mark. K947 is modified (5-hydroxylysine; alternate). A glycan (O-linked (Gal...) hydroxylysine; alternate) is linked at K947. 6 positions are modified to 4-hydroxyproline: P959, P962, P965, P983, P998, and P1001. A compositionally biased stretch (low complexity) spans 965–997 (PGEQGPSGASGPAGPRGPPGSAGAPGKDGLNGL). P1003 carries the post-translational modification 3-hydroxyproline. P1004 is subject to 4-hydroxyproline. Positions 1016–1031 (VGPPGPPGPPGPPGPP) are enriched in pro residues. 3-hydroxyproline is present on P1018. A 4-hydroxyproline modification is found at P1019. P1021 is subject to 3-hydroxyproline. P1022 bears the 4-hydroxyproline mark. P1024 is subject to 3-hydroxyproline. 4-hydroxyproline occurs at positions 1025, 1028, and 1031. The nonhelical region (C-terminal) stretch occupies residues 1032-1055 (SGAFDFSFLPQPPQEKAHDGGRYY). Over residues 1046–1057 (EKAHDGGRYYRA) the composition is skewed to basic and acidic residues. At K1047 the chain carries Allysine.

Belongs to the fibrillar collagen family. In terms of assembly, trimers of one alpha 2(I) and two alpha 1(I) chains. Contains mostly 4-hydroxyproline. Proline residues at the third position of the tripeptide repeating unit (G-X-Y) are hydroxylated in some or all of the chains. Post-translationally, contains 3-hydroxyproline at a few sites. This modification occurs on the first proline residue in the sequence motif Gly-Pro-Hyp, where Hyp is 4-hydroxyproline. In terms of processing, lysine residues at the third position of the tripeptide repeating unit (G-X-Y) are 5-hydroxylated in some or all of the chains. O-glycosylated on hydroxylated lysine residues. The O-linked glycan consists of a Glc-Gal disaccharide.

It localises to the secreted. It is found in the extracellular space. The protein resides in the extracellular matrix. Its function is as follows. Type I collagen is a member of group I collagen (fibrillar forming collagen). The protein is Collagen alpha-1(I) chain (COL1A1) of Mammut americanum (American mastodon).